The primary structure comprises 232 residues: Phosphoglycolate phosphatase (232 aa).

The active-site Nucleophile is the Asp-13. Asp-13, Asp-15, and Asp-175 together coordinate Mg(2+).

This sequence belongs to the HAD-like hydrolase superfamily. CbbY/CbbZ/Gph/YieH family. In terms of assembly, monomer. Mg(2+) is required as a cofactor. Requires chloride as cofactor.

The catalysed reaction is 2-phosphoglycolate + H2O = glycolate + phosphate. The protein operates within organic acid metabolism; glycolate biosynthesis; glycolate from 2-phosphoglycolate: step 1/1. In terms of biological role, specifically catalyzes the dephosphorylation of 2-phosphoglycolate. Is involved in the dissimilation of the intracellular 2-phosphoglycolate formed during the DNA repair of 3'-phosphoglycolate ends, a major class of DNA lesions induced by oxidative stress. In Yersinia pestis, this protein is Phosphoglycolate phosphatase.